Here is a 271-residue protein sequence, read N- to C-terminus: Ribosomal RNA small subunit methyltransferase A (271 aa).

The S-adenosyl-L-methionine site is built by Asn-28, Leu-30, Gly-54, Glu-75, Asp-99, and Asn-117.

It belongs to the class I-like SAM-binding methyltransferase superfamily. rRNA adenine N(6)-methyltransferase family. RsmA subfamily.

The protein localises to the cytoplasm. The enzyme catalyses adenosine(1518)/adenosine(1519) in 16S rRNA + 4 S-adenosyl-L-methionine = N(6)-dimethyladenosine(1518)/N(6)-dimethyladenosine(1519) in 16S rRNA + 4 S-adenosyl-L-homocysteine + 4 H(+). Functionally, specifically dimethylates two adjacent adenosines (A1518 and A1519) in the loop of a conserved hairpin near the 3'-end of 16S rRNA in the 30S particle. May play a critical role in biogenesis of 30S subunits. This is Ribosomal RNA small subunit methyltransferase A from Thermus thermophilus (strain ATCC 27634 / DSM 579 / HB8).